Reading from the N-terminus, the 215-residue chain is 3-dehydroquinate dehydratase (215 aa).

3-dehydroquinate-binding positions include Ser6, Glu31–Arg33, and Arg64. The active-site Proton donor/acceptor is His111. The active-site Schiff-base intermediate with substrate is Lys138. Residues Arg174, Thr193, and Gln197 each contribute to the 3-dehydroquinate site.

It belongs to the type-I 3-dehydroquinase family. As to quaternary structure, homodimer.

It carries out the reaction 3-dehydroquinate = 3-dehydroshikimate + H2O. It functions in the pathway metabolic intermediate biosynthesis; chorismate biosynthesis; chorismate from D-erythrose 4-phosphate and phosphoenolpyruvate: step 3/7. Involved in the third step of the chorismate pathway, which leads to the biosynthesis of aromatic amino acids. Catalyzes the cis-dehydration of 3-dehydroquinate (DHQ) and introduces the first double bond of the aromatic ring to yield 3-dehydroshikimate. The sequence is that of 3-dehydroquinate dehydratase from Ignicoccus hospitalis (strain KIN4/I / DSM 18386 / JCM 14125).